The following is a 123-amino-acid chain: Small ribosomal subunit protein uS12 (123 aa).

A 3-methylthioaspartic acid modification is found at Asp-89.

This sequence belongs to the universal ribosomal protein uS12 family. Part of the 30S ribosomal subunit. Contacts proteins S8 and S17. May interact with IF1 in the 30S initiation complex.

With S4 and S5 plays an important role in translational accuracy. Its function is as follows. Interacts with and stabilizes bases of the 16S rRNA that are involved in tRNA selection in the A site and with the mRNA backbone. Located at the interface of the 30S and 50S subunits, it traverses the body of the 30S subunit contacting proteins on the other side and probably holding the rRNA structure together. The combined cluster of proteins S8, S12 and S17 appears to hold together the shoulder and platform of the 30S subunit. The polypeptide is Small ribosomal subunit protein uS12 (Trichlorobacter lovleyi (strain ATCC BAA-1151 / DSM 17278 / SZ) (Geobacter lovleyi)).